Consider the following 343-residue polypeptide: Small ribosomal subunit biogenesis GTPase RsgA (343 aa).

A CP-type G domain is found at 116–275 (RGQLKPVAAN…LIDSPGIREF (160 aa)). Residues 163-166 (NKAD) and 217-225 (GQSGVGKSS) each bind GTP. Residues Cys-299, Cys-304, His-306, and Cys-312 each coordinate Zn(2+).

It belongs to the TRAFAC class YlqF/YawG GTPase family. RsgA subfamily. As to quaternary structure, monomer. Associates with 30S ribosomal subunit, binds 16S rRNA. It depends on Zn(2+) as a cofactor.

Its subcellular location is the cytoplasm. In terms of biological role, one of several proteins that assist in the late maturation steps of the functional core of the 30S ribosomal subunit. Helps release RbfA from mature subunits. May play a role in the assembly of ribosomal proteins into the subunit. Circularly permuted GTPase that catalyzes slow GTP hydrolysis, GTPase activity is stimulated by the 30S ribosomal subunit. This Pseudomonas fluorescens (strain ATCC BAA-477 / NRRL B-23932 / Pf-5) protein is Small ribosomal subunit biogenesis GTPase RsgA.